The chain runs to 296 residues: 110 kDa antigen (296 aa).

A 1; approximate repeat occupies 132 to 143 (EETQKTVEPEQI). Residues 132-296 (EETQKTVEPE…TQETQNTVEP (165 aa)) are 13.5 X 12 AA approximate tandem repeats of E-E-T-Q-K-T-V-E-P-E-Q-T. Residues 133–296 (ETQKTVEPEQ…TQETQNTVEP (164 aa)) are disordered. The stretch at 144-155 (EETQNTVEPEQT) is one 2; approximate repeat. The stretch at 156–167 (EETQKTVEPEQT) is repeat 3. The stretch at 168–179 (EETQNTVEPEQI) is one 4; approximate repeat. The stretch at 180 to 191 (EETQKTVEPEQT) is repeat 5. Over residues 181 to 271 (ETQKTVEPEQ…QTEETQKTVE (91 aa)) the composition is skewed to basic and acidic residues. The 6; approximate repeat unit spans residues 192 to 203 (EEAQKTVEPEQT). 6 consecutive repeat copies span residues 204–215 (EETQKTVEPEQT), 216–227 (EETQKTVEPEQT), 228–239 (EETQKTVEPEQT), 240–251 (EETQKTVEPEQT), 252–263 (EETQKTVEPEQT), and 264–275 (EETQKTVEPEQT). A 13; approximate repeat occupies 276-287 (EETQNTVEPEPT). Residues 277-296 (ETQNTVEPEPTQETQNTVEP) are compositionally biased toward polar residues. Residues 288 to 293 (QETQNT) form a 14; truncated repeat.

This is 110 kDa antigen from Plasmodium knowlesi.